Consider the following 566-residue polypeptide: Proline--tRNA ligase (566 aa).

The protein belongs to the class-II aminoacyl-tRNA synthetase family. ProS type 1 subfamily. As to quaternary structure, homodimer.

The protein resides in the cytoplasm. The enzyme catalyses tRNA(Pro) + L-proline + ATP = L-prolyl-tRNA(Pro) + AMP + diphosphate. Catalyzes the attachment of proline to tRNA(Pro) in a two-step reaction: proline is first activated by ATP to form Pro-AMP and then transferred to the acceptor end of tRNA(Pro). As ProRS can inadvertently accommodate and process non-cognate amino acids such as alanine and cysteine, to avoid such errors it has two additional distinct editing activities against alanine. One activity is designated as 'pretransfer' editing and involves the tRNA(Pro)-independent hydrolysis of activated Ala-AMP. The other activity is designated 'posttransfer' editing and involves deacylation of mischarged Ala-tRNA(Pro). The misacylated Cys-tRNA(Pro) is not edited by ProRS. This Exiguobacterium sibiricum (strain DSM 17290 / CCUG 55495 / CIP 109462 / JCM 13490 / 255-15) protein is Proline--tRNA ligase.